The primary structure comprises 383 residues: Lipid-A-disaccharide synthase (383 aa).

Belongs to the LpxB family.

It carries out the reaction 2-N,3-O-bis[(3R)-3-hydroxytetradecanoyl]-alpha-D-glucosaminyl 1-phosphate + UDP-2-N,3-O-bis[(3R)-3-hydroxytetradecanoyl]-alpha-D-glucosamine = lipid A disaccharide (E. coli) + UDP + H(+). The enzyme catalyses a lipid X + a UDP-2-N,3-O-bis[(3R)-3-hydroxyacyl]-alpha-D-glucosamine = a lipid A disaccharide + UDP + H(+). It participates in glycolipid biosynthesis; lipid IV(A) biosynthesis; lipid IV(A) from (3R)-3-hydroxytetradecanoyl-[acyl-carrier-protein] and UDP-N-acetyl-alpha-D-glucosamine: step 5/6. Its function is as follows. Condensation of UDP-2,3-diacylglucosamine and 2,3-diacylglucosamine-1-phosphate to form lipid A disaccharide, a precursor of lipid A, a phosphorylated glycolipid that anchors the lipopolysaccharide to the outer membrane of the cell. The protein is Lipid-A-disaccharide synthase of Pectobacterium atrosepticum (strain SCRI 1043 / ATCC BAA-672) (Erwinia carotovora subsp. atroseptica).